The sequence spans 1209 residues: Protein FAM83H (1209 aa).

A DUF1669 region spans residues 1–286 (MARRSQSSSQ…LFAQSEPLVP (286 aa)). A mediates interaction with CSNK1A1 and is required for FAM83H activity in keratin cytoskeleton organization region spans residues 1–286 (MARRSQSSSQ…LFAQSEPLVP (286 aa)). A phosphoserine mark is found at Ser-512, Ser-513, Ser-515, Ser-522, Ser-639, and Ser-660. 3 disordered regions span residues 512–545 (SSAS…NLGQ), 615–664 (RDLL…FRSR), and 735–760 (KGPA…VVSQ). Thr-749 is subject to Phosphothreonine. 4 positions are modified to phosphoserine: Ser-752, Ser-778, Ser-806, and Ser-871. Positions 829 to 1056 (AQGRSLSPQG…EERGSRVRLA (228 aa)) are disordered. A Phosphothreonine modification is found at Thr-873. A phosphoserine mark is found at Ser-882, Ser-893, Ser-904, and Ser-915. Residues 915-942 (SPTSGFPNRRGSPTTGLMEQKGSPTSTY) show a composition bias toward polar residues. Position 917 is a phosphothreonine (Thr-917). Position 926 is a phosphoserine (Ser-926). Position 928 is a phosphothreonine (Thr-928). Ser-937, Ser-948, Ser-959, Ser-970, Ser-977, Ser-1035, Ser-1041, and Ser-1057 each carry phosphoserine. Thr-1072 is subject to Phosphothreonine. Disordered regions lie at residues 1076 to 1147 (LEQI…EERD) and 1174 to 1193 (EAGS…RDSK). Residues Ser-1080, Ser-1098, and Ser-1177 each carry the phosphoserine modification.

This sequence belongs to the FAM83 family. In terms of assembly, directly interacts (via DUF1669) with casein kinase isoforms CSNK1A1, CSNK1A1L, CSNK1D and CSNK1E. Interaction with CSNK1A1 recruits CSNK1A1 to keratin filaments. Interacts with KRT18 and probably other keratins. As to expression, expressed in tooth follicle, eye, liver and kidney.

The protein localises to the cytoplasm. It localises to the cytoskeleton. May play a major role in the structural organization and calcification of developing enamel. May play a role in keratin cytoskeleton disassembly by recruiting CSNK1A1 to keratin filaments. Thereby, it may regulate epithelial cell migration. The chain is Protein FAM83H from Mus musculus (Mouse).